The sequence spans 654 residues: Fructose-1,6-bisphosphatase class 3 (654 aa).

The tract at residues 288 to 307 (NPAFKPKKRPDKHERLTQRE) is disordered. Residues 298-307 (DKHERLTQRE) show a composition bias toward basic and acidic residues.

This sequence belongs to the FBPase class 3 family. Mn(2+) serves as cofactor.

It carries out the reaction beta-D-fructose 1,6-bisphosphate + H2O = beta-D-fructose 6-phosphate + phosphate. It functions in the pathway carbohydrate biosynthesis; gluconeogenesis. In Staphylococcus aureus (strain MSSA476), this protein is Fructose-1,6-bisphosphatase class 3.